The following is a 194-amino-acid chain: 13S globulin basic chain (194 aa).

One can recognise a Cupin type-1 domain in the interval 13-162 (ENIKSPQEAD…SFQISSEEAE (150 aa)).

The protein belongs to the 11S seed storage protein (globulins) family. Hexamer; each subunit is composed of an acidic and a basic chain derived from a single precursor and linked by a disulfide bond. In terms of tissue distribution, cotyledons and endosperm protein bodies.

Seed storage protein with a relatively high level of Lys and Met. This is 13S globulin basic chain from Fagopyrum esculentum (Common buckwheat).